The sequence spans 674 residues: Methionine--tRNA ligase (674 aa).

A 'HIGH' region motif is present at residues 11-21 (PYANGDLHLGH). Cys-142, Cys-145, Cys-155, and Cys-158 together coordinate Zn(2+). A 'KMSKS' region motif is present at residues 330 to 334 (KMSKS). Lys-333 lines the ATP pocket. Residues 574 to 674 (DFMKVDLRIA…EGAQPGMRVK (101 aa)) form the tRNA-binding domain.

This sequence belongs to the class-I aminoacyl-tRNA synthetase family. MetG type 1 subfamily. Homodimer. Requires Zn(2+) as cofactor.

Its subcellular location is the cytoplasm. The catalysed reaction is tRNA(Met) + L-methionine + ATP = L-methionyl-tRNA(Met) + AMP + diphosphate. In terms of biological role, is required not only for elongation of protein synthesis but also for the initiation of all mRNA translation through initiator tRNA(fMet) aminoacylation. The chain is Methionine--tRNA ligase from Francisella tularensis subsp. tularensis (strain WY96-3418).